The chain runs to 412 residues: uncharacterized protein (412 aa).

Residues cysteine 62, cysteine 68, cysteine 71, and cysteine 143 each contribute to the [4Fe-4S] cluster site. S-adenosyl-L-methionine contacts are provided by glutamine 243, phenylalanine 270, glutamate 290, and aspartate 338. Cysteine 364 serves as the catalytic Nucleophile.

This sequence belongs to the class I-like SAM-binding methyltransferase superfamily. RNA M5U methyltransferase family.

This is an uncharacterized protein from Mesorhizobium japonicum (strain LMG 29417 / CECT 9101 / MAFF 303099) (Mesorhizobium loti (strain MAFF 303099)).